The following is a 249-amino-acid chain: O-methyltransferase adaD (249 aa).

A compositionally biased stretch (low complexity) spans 1–15 (MSSVTLTTTTTTTST). The segment at 1–26 (MSSVTLTTTTTTTSTPPKPTPKDEPQ) is disordered.

The protein belongs to the methyltransferase superfamily.

The enzyme catalyses 2-acetyl-3,4a,8,10,11,12a-hexahydroxy-1,4,4a,5,12,12a-hexahydrotetracene-1,12-dione + S-adenosyl-L-methionine = TAN-1612 + S-adenosyl-L-homocysteine + H(+). Its pathway is secondary metabolite biosynthesis. O-methyltransferase; part of the gene cluster that mediates the biosynthesis of the linear tetracyclic TAN-1612 neuropeptide Y receptor antagonist. The decaketide backbone of TAN-1612 is synthesized by the non-reducing polyketide synthase adaA via condensation of one acetyl-CoA starter unit with 9 malonyl-CoA units. The FAD-dependent monooxygenase adaC then performs hydroxylation at C2 while the polaketide chain is still attached to the NRPKS adaA. The alpha-hydroxylation step at C2 appears to be crucial for the following C18-C1 Claisen cyclization and release of the C9-hydroxyl version of TAN-1612 from the NRPKS adaA, two steps performed by the lactamase-like protein adaB. Finally, the O-methyltransferase adaD performs the C9 O-methylation to complete the biosynthesis of TAN-1612. The polypeptide is O-methyltransferase adaD (Aspergillus niger).